Here is a 93-residue protein sequence, read N- to C-terminus: Alpha-defensin 9 (93 aa).

Positions 1 to 19 (MKTLVLLSALVLLAFQVQA) are cleaved as a signal peptide. A propeptide spanning residues 20–58 (DPIQNTDEETKTEEQPGEEDQAVSVSFGDPEGSSLQEES) is cleaved from the precursor. The interval 23–56 (QNTDEETKTEEQPGEEDQAVSVSFGDPEGSSLQE) is disordered. Disulfide bonds link Cys64–Cys92, Cys66–Cys81, and Cys71–Cys91.

It belongs to the alpha-defensin family. Paneth cells of the small bowel.

It localises to the secreted. Its function is as follows. Probably contributes to the antimicrobial barrier function of the small bowel mucosa. This chain is Alpha-defensin 9 (Defa9), found in Mus musculus (Mouse).